The sequence spans 392 residues: ABSCISIC ACID-INSENSITIVE 5-like protein 4 (392 aa).

Residues 1–22 are disordered; that stretch reads MGTHIDINNLGGDTSRGNESKP. Residues Ser-28, Ser-50, and Ser-96 each carry the phosphoserine modification. Thr-135 carries the post-translational modification Phosphothreonine. The segment at 266–297 is disordered; the sequence is NMGGAGGTVTATSPGTSSAENNTWSSPVPYVF. The span at 274-291 shows a compositional bias: polar residues; sequence VTATSPGTSSAENNTWSS. The region spanning 311 to 374 is the bZIP domain; that stretch reads VERRQKRMIK…NSELKEFSKQ (64 aa). Positions 313-332 are basic motif; it reads RRQKRMIKNRESAARSRARK. The interval 339 to 360 is leucine-zipper; it reads LEAEIESLKLVNQDLQKKQAEI.

This sequence belongs to the bZIP family. ABI5 subfamily. As to quaternary structure, DNA-binding heterodimer. Interacts with ABI3 and the AFP proteins AFP1, AFP2, AFP3 and AFP4. Phosphorylated by CPK4, CPK11, SRK2D and SRK2I in vitro.

The protein localises to the nucleus. In terms of biological role, binds to the ABA-responsive element (ABRE). Could participate in abscisic acid-regulated gene expression. The polypeptide is ABSCISIC ACID-INSENSITIVE 5-like protein 4 (ABF1) (Arabidopsis thaliana (Mouse-ear cress)).